The following is a 188-amino-acid chain: GMP synthase [glutamine-hydrolyzing] subunit A (188 aa).

The region spanning 1–188 is the Glutamine amidotransferase type-1 domain; the sequence is MIVILNNGGQ…FCKVCGLLGE (188 aa). The Nucleophile role is filled by Cys76. Catalysis depends on residues His163 and Glu165.

In terms of assembly, heterodimer composed of a glutamine amidotransferase subunit (A) and a GMP-binding subunit (B).

The catalysed reaction is XMP + L-glutamine + ATP + H2O = GMP + L-glutamate + AMP + diphosphate + 2 H(+). The protein operates within purine metabolism; GMP biosynthesis; GMP from XMP (L-Gln route): step 1/1. In terms of biological role, catalyzes the synthesis of GMP from XMP. The polypeptide is GMP synthase [glutamine-hydrolyzing] subunit A (Methanococcus aeolicus (strain ATCC BAA-1280 / DSM 17508 / OCM 812 / Nankai-3)).